We begin with the raw amino-acid sequence, 470 residues long: 6-phospho-beta-galactosidase (470 aa).

Q19, H116, N159, E160, and N297 together coordinate D-galactose 6-phosphate. The active-site Proton donor is E160. Residue E375 is the Nucleophile of the active site. Residues S430, W431, K437, and Y439 each coordinate D-galactose 6-phosphate.

It belongs to the glycosyl hydrolase 1 family.

It carries out the reaction a 6-phospho-beta-D-galactoside + H2O = D-galactose 6-phosphate + an alcohol. It functions in the pathway carbohydrate metabolism; lactose degradation; D-galactose 6-phosphate and beta-D-glucose from lactose 6-phosphate: step 1/1. This is 6-phospho-beta-galactosidase from Staphylococcus aureus (strain MRSA252).